Reading from the N-terminus, the 158-residue chain is Small ribosomal subunit protein uS15 (158 aa).

Residues 1 to 18 (MARMHARKRGKSGSKRPP) are compositionally biased toward basic residues. The tract at residues 1 to 21 (MARMHARKRGKSGSKRPPRTA) is disordered.

It belongs to the universal ribosomal protein uS15 family. As to quaternary structure, part of the 30S ribosomal subunit.

The chain is Small ribosomal subunit protein uS15 from Pyrococcus horikoshii (strain ATCC 700860 / DSM 12428 / JCM 9974 / NBRC 100139 / OT-3).